Reading from the N-terminus, the 75-residue chain is MARFFRRRKFCRFSADGVVQIDYKDIAMLKNYVTESGKIVPSRITGTSAKYQRQLSTAIKRARFLALLPYTDSHK.

It belongs to the bacterial ribosomal protein bS18 family. In terms of assembly, part of the 30S ribosomal subunit. Forms a tight heterodimer with protein bS6.

Its function is as follows. Binds as a heterodimer with protein bS6 to the central domain of the 16S rRNA, where it helps stabilize the platform of the 30S subunit. In Pseudoalteromonas atlantica (strain T6c / ATCC BAA-1087), this protein is Small ribosomal subunit protein bS18.